A 455-amino-acid polypeptide reads, in one-letter code: tRNA modification GTPase MnmE (455 aa).

Residues lysine 29, glutamate 91, and arginine 131 each contribute to the (6S)-5-formyl-5,6,7,8-tetrahydrofolate site. A TrmE-type G domain is found at 226-378 (GLKVALVGLP…LIQELLKLAG (153 aa)). Residue asparagine 236 participates in K(+) binding. GTP-binding positions include 236–241 (NVGKSS), 255–261 (TDLPGTT), 280–283 (DTAG), and 341–344 (NKAD). Residue serine 240 coordinates Mg(2+). Residues threonine 255, leucine 257, and threonine 260 each contribute to the K(+) site. Threonine 261 is a binding site for Mg(2+). Lysine 455 provides a ligand contact to (6S)-5-formyl-5,6,7,8-tetrahydrofolate.

Belongs to the TRAFAC class TrmE-Era-EngA-EngB-Septin-like GTPase superfamily. TrmE GTPase family. As to quaternary structure, homodimer. Heterotetramer of two MnmE and two MnmG subunits. It depends on K(+) as a cofactor.

Its subcellular location is the cytoplasm. In terms of biological role, exhibits a very high intrinsic GTPase hydrolysis rate. Involved in the addition of a carboxymethylaminomethyl (cmnm) group at the wobble position (U34) of certain tRNAs, forming tRNA-cmnm(5)s(2)U34. This chain is tRNA modification GTPase MnmE, found in Prochlorococcus marinus (strain SARG / CCMP1375 / SS120).